The following is a 255-amino-acid chain: Small ribosomal subunit protein eS1 (255 aa).

Position 2 is an N-acetylalanine; partial (A2).

This sequence belongs to the eukaryotic ribosomal protein eS1 family. Component of the small ribosomal subunit. Mature ribosomes consist of a small (40S) and a large (60S) subunit. The 40S subunit contains about 33 different proteins and 1 molecule of RNA (18S). The 60S subunit contains about 49 different proteins and 3 molecules of RNA (25S, 5.8S and 5S).

The protein localises to the cytoplasm. The polypeptide is Small ribosomal subunit protein eS1 (Kluyveromyces lactis (strain ATCC 8585 / CBS 2359 / DSM 70799 / NBRC 1267 / NRRL Y-1140 / WM37) (Yeast)).